The following is a 360-amino-acid chain: Ferredoxin--NADP reductase, leaf isozyme 1, chloroplastic (360 aa).

The N-terminal 49 residues, 1-49 (MAAAISAAVSLPSSKSSSLLTKISSVSPQRIFLKKSTVCYRRVVSVKAQ), are a transit peptide targeting the chloroplast. Residues 81–203 (KNPYTGRCLL…TGPVGKEMLM (123 aa)) form the FAD-binding FR-type domain. FAD is bound by residues 139 to 142 (RLYS), 160 to 162 (CVK), Tyr166, and 177 to 179 (VCS). The NADP(+) site is built by Ser142 and Lys162. Cys178 and Cys183 are oxidised to a cystine. A Phosphoserine modification is found at Ser179. At Thr210 the chain carries Phosphothreonine. Thr218 is an FAD binding site. NADP(+)-binding positions include Thr218, 250–251 (VP), 280–281 (SR), Lys290, 319–320 (GL), and Glu358.

This sequence belongs to the ferredoxin--NADP reductase type 1 family. Heterodimer with LFNR2. Interacts with PGRL1A and PGRL1B. Interacts with TIC62. Component of high molecular weight thylakoid LFNRs-containing protein complexes containing LIR1, LFNR1, LFNR2, TIC62 and TROL proteins. Interacts directly with LIR1 and TIC62; LIR1 increases the affinity of LFNR1 and LFNR2 for TIC62. Binds to YCF54 in chloroplasts. It depends on FAD as a cofactor. May form interchain disulfide bonds with LIR1. In terms of tissue distribution, expressed in shoots. Restricted to green tissues, being more abundant in siliques.

It localises to the plastid. Its subcellular location is the chloroplast stroma. The protein resides in the chloroplast thylakoid membrane. The catalysed reaction is 2 reduced [2Fe-2S]-[ferredoxin] + NADP(+) + H(+) = 2 oxidized [2Fe-2S]-[ferredoxin] + NADPH. It participates in energy metabolism; photosynthesis. Its function is as follows. Plays a key role in regulating the relative amounts of cyclic and non-cyclic electron flow to meet the demands of the plant for ATP and reducing power. Probable electron donor required for the MgProto monomethylester (MgProtoME) cyclase complex reaction to form protochlorophyllide, thus connecting chlorophyll synthesis with photosynthetic activity. The chain is Ferredoxin--NADP reductase, leaf isozyme 1, chloroplastic from Arabidopsis thaliana (Mouse-ear cress).